Reading from the N-terminus, the 386-residue chain is Vesicle-associated protein 2-2 (386 aa).

Methionine 1 is modified (N-acetylmethionine). The Cytoplasmic segment spans residues 1–363 (MNMPLLDIQP…TKKIVKEVHN (363 aa)). One can recognise an MSP domain in the interval 5-125 (LLDIQPRTLQ…EENKLRVTLV (121 aa)). Serine 279 is subject to Phosphoserine. Residues 300 to 353 (ELKLVKDIEEMKLKVDALESKLKQADSTISKLMEERSISSQHRQSLQHELAELR) are a coiled coil. A helical; Anchor for type IV membrane protein transmembrane segment spans residues 364–384 (GFPLLYVCVVAFIAYVIGHFL).

The protein belongs to the VAMP-associated protein (VAP) (TC 9.B.17) family. As to quaternary structure, interacts with cowpea mosaic virus (CPMV) NTP-binding protein (NTB).

The protein localises to the endoplasmic reticulum membrane. Its function is as follows. May play a role in vesicle trafficking. In Arabidopsis thaliana (Mouse-ear cress), this protein is Vesicle-associated protein 2-2 (PVA22).